Here is a 365-residue protein sequence, read N- to C-terminus: MSLEEKKTTESKEKDKALSLVLGQIERNFGRGSIMRLGDASRMKVETISTGALTLDLALGGGYPKGRVVEVYGPESSGKTTLTLHAIAEVQKNGGVAAFVDAEHALDPVYAASLGVDVENLLVSQPDTGEMALEIVDQLIRSSAVDLVVVDSVAALTPRAEIEGEMGDHVIGSQARLMSQAMRKITGNIGKSGCTVIFLNQLRLKIGITYGNPETTTGGNALKFYASVRLDIRRIQTLKRGTEEYGIRAKVKVAKNKVAPPFRIAEFDILFGKGISTTGCLLDLAEETNIIIRRGAWYSYEGENIGQGRDNTIIWLDQNLEIKNKVESMIKEKLTEGTEVSSNSMKALNSNPTSTIAVNDIKTVA.

G73–T80 lines the ATP pocket.

The protein belongs to the RecA family.

The protein localises to the cytoplasm. Its function is as follows. Can catalyze the hydrolysis of ATP in the presence of single-stranded DNA, the ATP-dependent uptake of single-stranded DNA by duplex DNA, and the ATP-dependent hybridization of homologous single-stranded DNAs. It interacts with LexA causing its activation and leading to its autocatalytic cleavage. The polypeptide is Protein RecA (Prochlorococcus marinus (strain MIT 9215)).